Reading from the N-terminus, the 143-residue chain is Peptide methionine sulfoxide reductase B8 (143 aa).

Residues 18–139 (DEEWRAVLSP…NSVSLKFASA (122 aa)) form the MsrB domain. Residues Cys-57, Cys-60, Cys-103, and Cys-106 each contribute to the Zn(2+) site. A disulfide bridge links Cys-75 with Cys-128. The Nucleophile role is filled by Cys-128.

The protein belongs to the MsrB Met sulfoxide reductase family. The cofactor is Zn(2+).

Its subcellular location is the cytoplasm. The protein resides in the cytosol. The catalysed reaction is L-methionyl-[protein] + [thioredoxin]-disulfide + H2O = L-methionyl-(R)-S-oxide-[protein] + [thioredoxin]-dithiol. Catalyzes the reduction of methionine sulfoxide (MetSO) to methionine in proteins. Plays a protective role against oxidative stress by restoring activity to proteins that have been inactivated by methionine oxidation. MSRB family specifically reduces the MetSO R-enantiomer. In Arabidopsis thaliana (Mouse-ear cress), this protein is Peptide methionine sulfoxide reductase B8 (MSRB8).